Here is a 234-residue protein sequence, read N- to C-terminus: Polycomb group RING finger protein 5-A (234 aa).

The segment at 18–57 adopts an RING-type zinc-finger fold; that stretch reads CSICRGYLIKPTAVTECLHTFCKSCIVQHFEESNECPECG. The segment at 97–130 is disordered; that stretch reads FWRKHKIKSNGEDGPRAKKSRLSGEDDDGNGGDY.

In terms of assembly, component of a PRC1-like complex.

It is found in the nucleus. Component of Polycomb group (PcG) multiprotein complexes; the complex class is required to maintain the transcriptionally repressive state of some genes. The chain is Polycomb group RING finger protein 5-A from Danio rerio (Zebrafish).